Reading from the N-terminus, the 344-residue chain is Dihydroorotate dehydrogenase (quinone) (344 aa).

Residues 61–65 and threonine 85 contribute to the FMN site; that span reads AGLDK. Lysine 65 contributes to the substrate binding site. 110–114 serves as a coordination point for substrate; sequence NRMGF. The FMN site is built by asparagine 138 and asparagine 171. Asparagine 171 provides a ligand contact to substrate. Serine 174 serves as the catalytic Nucleophile. Asparagine 176 is a binding site for substrate. The FMN site is built by lysine 216 and threonine 244. 245–246 lines the substrate pocket; that stretch reads NT. Residues glycine 267, glycine 296, and 317–318 contribute to the FMN site; that span reads YS.

It belongs to the dihydroorotate dehydrogenase family. Type 2 subfamily. As to quaternary structure, monomer. Requires FMN as cofactor.

Its subcellular location is the cell membrane. It carries out the reaction (S)-dihydroorotate + a quinone = orotate + a quinol. The protein operates within pyrimidine metabolism; UMP biosynthesis via de novo pathway; orotate from (S)-dihydroorotate (quinone route): step 1/1. Its function is as follows. Catalyzes the conversion of dihydroorotate to orotate with quinone as electron acceptor. In Psychrobacter cryohalolentis (strain ATCC BAA-1226 / DSM 17306 / VKM B-2378 / K5), this protein is Dihydroorotate dehydrogenase (quinone).